The chain runs to 368 residues: Mitogen-activated protein kinase HOG1B (368 aa).

Positions 20–299 (YVNLEPVGMG…ASQALAHPYL (280 aa)) constitute a Protein kinase domain. ATP-binding positions include 26–34 (VGMGAFGLV) and K49. D141 acts as the Proton acceptor in catalysis. Position 171 is a phosphothreonine (T171). Residues 171-173 (TGY) carry the TXY motif. Y173 carries the phosphotyrosine modification.

Belongs to the protein kinase superfamily. Ser/Thr protein kinase family. MAP kinase subfamily. HOG1 sub-subfamily. Requires Mg(2+) as cofactor. Post-translationally, phosphorylated. Dually phosphorylated on Thr-171 and Tyr-173, which activates the enzyme. Rapidly dephosphorylated upon either hypo- or hyperosmotic shock.

The protein localises to the cytoplasm. Its subcellular location is the nucleus. The enzyme catalyses L-seryl-[protein] + ATP = O-phospho-L-seryl-[protein] + ADP + H(+). It catalyses the reaction L-threonyl-[protein] + ATP = O-phospho-L-threonyl-[protein] + ADP + H(+). With respect to regulation, activated by tyrosine and threonine phosphorylation. In terms of biological role, mitogen-activated protein kinase involved in a signal transduction pathway that is activated by changes in the osmolarity of the extracellular environment. Controls osmotic regulation of transcription of target genes. The protein is Mitogen-activated protein kinase HOG1B (HOG1B) of Wallemia ichthyophaga (strain EXF-994 / CBS 113033).